The following is a 621-amino-acid chain: UvrABC system protein C (621 aa).

Positions 21–100 (AEPGVYLMRD…IKTYQPPYNV (80 aa)) constitute a GIY-YIG domain. Positions 210–245 (DELIRELKEKMAQAAQQENYEAAARYRDQIRGLEQL) constitute a UVR domain.

Belongs to the UvrC family. Interacts with UvrB in an incision complex.

The protein localises to the cytoplasm. The UvrABC repair system catalyzes the recognition and processing of DNA lesions. UvrC both incises the 5' and 3' sides of the lesion. The N-terminal half is responsible for the 3' incision and the C-terminal half is responsible for the 5' incision. The polypeptide is UvrABC system protein C (Synechococcus sp. (strain JA-3-3Ab) (Cyanobacteria bacterium Yellowstone A-Prime)).